A 202-amino-acid chain; its full sequence is Transmembrane protein 223 (202 aa).

At 1 to 43 (MAAPWRRWPTGLLAVLRPLLTCRPLQGTTLQRDVLLFEHDRGR) the chain is on the mitochondrial matrix side. A helical transmembrane segment spans residues 44–64 (FFTILGLFCAGQGVFWASMAV). The Mitochondrial intermembrane portion of the chain corresponds to 65–97 (AAVSRPPVPVQPLDAEVPNRGPFDLRSALWRYG). A helical membrane pass occupies residues 98-118 (LAVGCGAIGALVLGAGLLFSL). Residues 119–202 (RSVRSVVLRA…DNTVGAYRSL (84 aa)) are Mitochondrial matrix-facing.

This sequence belongs to the TMEM223 family. In terms of assembly, associates with the mitochondrial ribosome.

It is found in the mitochondrion inner membrane. In terms of biological role, mitochondrial ribosome-associated protein involved in the first steps of cytochrome c oxidase complex (complex IV) biogenesis. Stimulates the translation of MT-CO1 mRNA and is a constituent of early MT-CO1 assembly intermediates. The chain is Transmembrane protein 223 from Homo sapiens (Human).